The chain runs to 123 residues: MPTINQLIASPRVIQKSRKKVPALQQSPQKRGVCTRVYTTTPKKPNSALRKVAKVRLTNGFEVIGYIPGEGHNLQEHSVVMIRGGRVKDLPGVRYHILRGVLDTQGVKNRKQRRSKYGAKRPK.

Position 89 is a 3-methylthioaspartic acid (D89).

This sequence belongs to the universal ribosomal protein uS12 family. Part of the 30S ribosomal subunit. Contacts proteins S8 and S17. May interact with IF1 in the 30S initiation complex.

In terms of biological role, with S4 and S5 plays an important role in translational accuracy. Functionally, interacts with and stabilizes bases of the 16S rRNA that are involved in tRNA selection in the A site and with the mRNA backbone. Located at the interface of the 30S and 50S subunits, it traverses the body of the 30S subunit contacting proteins on the other side and probably holding the rRNA structure together. The combined cluster of proteins S8, S12 and S17 appears to hold together the shoulder and platform of the 30S subunit. In Nitrobacter hamburgensis (strain DSM 10229 / NCIMB 13809 / X14), this protein is Small ribosomal subunit protein uS12.